A 239-amino-acid chain; its full sequence is Isoprenyl transferase (239 aa).

Asp-16 is a catalytic residue. Residue Asp-16 participates in Mg(2+) binding. Residues 17 to 20, Trp-21, Arg-29, His-33, and 61 to 63 each bind substrate; these read GNGR and STE. The active-site Proton acceptor is the Asn-64. Substrate is bound by residues Trp-65, Arg-67, Arg-187, and 193–195; that span reads RLS. A Mg(2+)-binding site is contributed by Glu-206.

The protein belongs to the UPP synthase family. As to quaternary structure, homodimer. The cofactor is Mg(2+).

In terms of biological role, catalyzes the condensation of isopentenyl diphosphate (IPP) with allylic pyrophosphates generating different type of terpenoids. The protein is Isoprenyl transferase of Lactobacillus johnsonii (strain CNCM I-12250 / La1 / NCC 533).